A 374-amino-acid polypeptide reads, in one-letter code: 4-galactosyl-N-acetylglucosaminide 3-alpha-L-fucosyltransferase FUT5 (374 aa).

The Cytoplasmic portion of the chain corresponds to 1–15 (MDPLGPAKPQWLWRR). Residues 16–34 (CLAGLLFQLLVAVCFFSYL) form a helical; Signal-anchor for type II membrane protein membrane-spanning segment. Residues 35–374 (RVSRDDATGS…TVRSIAAWFT (340 aa)) lie on the Lumenal side of the membrane. Asn60, Asn105, Asn167, and Asn198 each carry an N-linked (GlcNAc...) asparagine glycan.

Belongs to the glycosyltransferase 10 family. Liver, colon and testis and trace amounts in T-cells and brain.

The protein resides in the golgi apparatus. It localises to the golgi stack membrane. It carries out the reaction a beta-D-galactosyl-(1-&gt;3)-N-acetyl-beta-D-glucosaminyl derivative + GDP-beta-L-fucose = a beta-D-galactosyl-(1-&gt;3)-[alpha-L-fucosyl-(1-&gt;4)]-N-acetyl-beta-D-glucosaminyl derivative + GDP + H(+). The enzyme catalyses an N-acetyl-alpha-neuraminyl-(2-&gt;3)-beta-D-galactosyl-(1-&gt;4)-N-acetyl-beta-D-glucosaminyl derivative + GDP-beta-L-fucose = an alpha-Neu5Ac-(2-&gt;3)-beta-D-Gal-(1-&gt;4)-[alpha-L-Fuc-(1-&gt;3)]-beta-D-GlcNAc derivative + GDP + H(+). It catalyses the reaction an alpha-Neu5Ac-(2-&gt;3)-beta-D-Gal-(1-&gt;4)-beta-D-GlcNAc-(1-&gt;3)-beta-D-Gal-(1-&gt;4)-[alpha-L-Fuc-(1-&gt;3)]-beta-D-GlcNAc derivative + GDP-beta-L-fucose = an alpha-Neu5Ac-(2-&gt;3)-beta-D-Gal-(1-&gt;4)-[alpha-L-Fuc-(1-&gt;3)]-beta-D-GlcNAc-(1-&gt;3)-beta-D-Gal-(1-&gt;4)-[alpha-L-Fuc-(1-&gt;3)]-beta-D-GlcNAc derivative + GDP + H(+). The catalysed reaction is a beta-D-galactosyl-(1-&gt;4)-N-acetyl-beta-D-glucosaminyl derivative + GDP-beta-L-fucose = a beta-D-galactosyl-(1-&gt;4)-[alpha-L-fucosyl-(1-&gt;3)]-N-acetyl-beta-D-glucosaminyl derivative + GDP + H(+). It carries out the reaction a neolactoside nLc4Cer + GDP-beta-L-fucose = a neolactoside III(3)-alpha-Fuc-nLc4Cer + GDP + H(+). The enzyme catalyses a neolactoside nLc6Cer + GDP-beta-L-fucose = beta-D-galactosyl-(1-&gt;4)-N-acetyl-beta-D-glucosaminyl-(1-&gt;3)-beta-D-galactosyl-(1-&gt;4)-[alpha-L-fucosyl-(1-&gt;3)]-N-acetyl-beta-D-glucosaminyl-(1-&gt;3)-beta-D-galactosyl-(1-&gt;4)-beta-D-glucosyl-(1&lt;-&gt;1')-ceramide + GDP + H(+). It catalyses the reaction a neolactoside nLc6Cer(d18:1(4E)) + GDP-beta-L-fucose = a neolactoside III(3)-alpha-Fuc-nLc6Cer(d18:1(4E)) + GDP + H(+). The catalysed reaction is a neolactoside nLc4Cer(d18:1(4E)) + GDP-beta-L-fucose = a neolactoside III(3)-alpha-Fuc-nLc4Cer(d18:1(4E)) + GDP + H(+). It carries out the reaction a neolactoside VI(3)-alpha-NeuNAc-nLc6Cer + GDP-beta-L-fucose = a neolactoside VI(3)-alpha-NeuAc,III(3)-alphaFuc-nLc6Cer + GDP + H(+). The enzyme catalyses beta-D-galactosyl-(1-&gt;4)-N-acetyl-D-glucosamine + GDP-beta-L-fucose = beta-D-galactosyl-(1-&gt;4)-[alpha-L-fucosyl-(1-&gt;3)]-N-acetyl-D-glucosamine + GDP + H(+). It catalyses the reaction N-acetyl-alpha-neuraminosyl-(2-&gt;3)-beta-D-galactosyl-(1-&gt;4)-N-acetyl-beta-D-glucosamine + GDP-beta-L-fucose = N-acetyl-alpha-neuraminosyl-(2-&gt;3)-beta-D-galactosyl-(1-&gt;4)-[alpha-L-fucosyl-(1-&gt;3)]-N-acetyl-beta-D-glucosamine + GDP + H(+). The catalysed reaction is alpha-L-Fuc-(1-&gt;2)-beta-D-Gal-(1-&gt;4)-D-GlcNAc + GDP-beta-L-fucose = alpha-L-Fuc-(1-&gt;2)-beta-D-Gal-(1-&gt;4)-[alpha-L-Fuc-(1-&gt;3)]-D-GlcNAc + GDP + H(+). It carries out the reaction an alpha-Neu5Ac-(2-&gt;3)-beta-D-Gal-(1-&gt;3)-D-GlcNAc derivative + GDP-beta-L-fucose = an alpha-Neu5Ac-(2-&gt;3)-beta-D-Gal-(1-&gt;3)-[alpha-L-Fuc-(1-&gt;4)]-beta-D-GlcNAc derivative + GDP + H(+). It participates in protein modification; protein glycosylation. Catalyzes preferentially the transfer of L-fucose, from a guanosine diphosphate-beta-L-fucose, to the N-acetyl-beta-D-glucosamine (GlcNAc) of an N-acetyllactosamine unit (type 2 chain) of an oligosaccharide, or a glycoprotein- and a glycolipid-linked N-acetyllactosamine unit via an alpha (1,3) linkage and participates in the surface expression of VIM-2, Lewis X/SSEA-1 and sialyl Lewis X antigens. Preferentially transfers fucose to the GlcNAc of an internal N-acetyllactosamine unit of a poly-N-acetyllactosamine chain acceptor substrate. Also catalyzes to a lesser extend the transfer of L-fucose to the GlcNAc of a type 1 (beta-D-galactosyl-(1-&gt;3)-N-acetyl-beta-D-glucosaminyl) or H-type 1 (alpha-L-Fuc-(1-&gt;2)-beta-D-Gal-(1-&gt;3)-D-GlcNAc) chain oligosaccharide via an alpha (1,4) linkage. Preferentially catalyzes sialylated type 2 oligosaccharide acceptors over neutral type 2 or H type 2 (alpha-L-Fuc-(1-&gt;2)-beta-D-Gal-(1-&gt;4)-D-GlcNAc) oligosaccharide acceptors. Lactose-based structures are also acceptor substrates. The protein is 4-galactosyl-N-acetylglucosaminide 3-alpha-L-fucosyltransferase FUT5 of Homo sapiens (Human).